The sequence spans 568 residues: K(+) efflux antiporter 5 (568 aa).

An N-terminal signal peptide occupies residues 1-20; that stretch reads MARFAVIGLTFLLLLGTSLS. The disordered stretch occupies residues 59–78; the sequence is EFSENDSPEGSDGASFNSSV. The next 12 membrane-spanning stretches (helical) occupy residues 154–174, 178–198, 201–221, 230–250, 264–284, 298–318, 334–354, 389–409, 422–442, 447–467, 476–496, and 510–530; these read LISD…VFSC, PVIV…LKFI, MVQV…ALGL, VVGP…MFLC, GIFV…KFLV, IGIL…LPVL, LLLI…SFVP, LGLS…TTEF, NLFA…HFLW, ILLA…AVVV, ISFH…VLLS, and LLLL…FKLI.

The protein belongs to the monovalent cation:proton antiporter 2 (CPA2) transporter (TC 2.A.37) family. KEA (TC 2.A.37.1) subfamily. In terms of tissue distribution, expressed in roots, stems, leaves, flowers and silique.

Its subcellular location is the golgi apparatus membrane. The protein resides in the golgi apparatus. The protein localises to the trans-Golgi network membrane. It is found in the prevacuolar compartment membrane. It localises to the endomembrane system. The enzyme catalyses K(+)(in) + H(+)(out) = K(+)(out) + H(+)(in). Its function is as follows. Electroneutral K(+)/H(+) efflux antiporter involved in K(+) homeostasis and osmotic adjustment. Together with KEA4 and KEA6, promotes growth and development, and facilitates endosomal pH and ions homeostasis, as well as salt tolerance (e.g. K(+), NaCl and LiCl), probably by supporting cell wall biosynthesis during rapid etiolated seedling growth. The polypeptide is K(+) efflux antiporter 5 (Arabidopsis thaliana (Mouse-ear cress)).